The following is a 274-amino-acid chain: MGNLSVNQNKLQKRLRRLAGEAVTDFNMIEDGDKVMVCLSGGKDSYTMLDVLLYLQKVAPIRFEVVAVNMDQKQPGFPEHVLPEYLKSIGVEYHIIEKDTYSVVKEKIPEGKTTCSLCSRLRRGTLYTFADEIGATKMALGHHRDDILETFFLNMFYGGTLKAMPPKLLSDDGRNVVIRPLAYCSEADIEAYSKMKEFPIIPCNLCGSQENLQRQVVKEMLQEWERKSPGRTEIMFRALQNVVPSQLADRNLFDFKSLRIDDSATPRFVDVMSL.

A PP-loop motif motif is present at residues 40-45 (SGGKDS). [4Fe-4S] cluster contacts are provided by Cys-115, Cys-118, and Cys-206.

The protein belongs to the TtcA family. In terms of assembly, homodimer. Mg(2+) is required as a cofactor. [4Fe-4S] cluster serves as cofactor.

It localises to the cytoplasm. The catalysed reaction is cytidine(32) in tRNA + S-sulfanyl-L-cysteinyl-[cysteine desulfurase] + AH2 + ATP = 2-thiocytidine(32) in tRNA + L-cysteinyl-[cysteine desulfurase] + A + AMP + diphosphate + H(+). The protein operates within tRNA modification. In terms of biological role, catalyzes the ATP-dependent 2-thiolation of cytidine in position 32 of tRNA, to form 2-thiocytidine (s(2)C32). The sulfur atoms are provided by the cysteine/cysteine desulfurase (IscS) system. This is tRNA-cytidine(32) 2-sulfurtransferase from Stutzerimonas stutzeri (strain A1501) (Pseudomonas stutzeri).